Reading from the N-terminus, the 480-residue chain is ATP synthase subunit beta 1 (480 aa).

Residue 154–161 (GGAGVGKT) participates in ATP binding.

This sequence belongs to the ATPase alpha/beta chains family. In terms of assembly, F-type ATPases have 2 components, CF(1) - the catalytic core - and CF(0) - the membrane proton channel. CF(1) has five subunits: alpha(3), beta(3), gamma(1), delta(1), epsilon(1). CF(0) has four main subunits: a(1), b(1), b'(1) and c(9-12).

The protein localises to the cell inner membrane. It carries out the reaction ATP + H2O + 4 H(+)(in) = ADP + phosphate + 5 H(+)(out). Functionally, produces ATP from ADP in the presence of a proton gradient across the membrane. The catalytic sites are hosted primarily by the beta subunits. The protein is ATP synthase subunit beta 1 of Chlorobaculum tepidum (strain ATCC 49652 / DSM 12025 / NBRC 103806 / TLS) (Chlorobium tepidum).